Reading from the N-terminus, the 306-residue chain is Armadillo repeat-containing protein 10 (306 aa).

Residues 7–29 traverse the membrane as a helical segment; sequence VGWVAAGLVLGAGACYCIYRLTR. Ser43 carries the phosphoserine modification. Thr48 carries the post-translational modification Phosphothreonine. The ARM repeat unit spans residues 101 to 143; sequence GGIPIVGNKINSLNQSIKEKALNALNNLSVNVENQTKIKIYVP.

Interacts with the DNA-binding domain of p53/TP53.

The protein resides in the endoplasmic reticulum membrane. The protein localises to the mitochondrion outer membrane. In terms of biological role, may play a role in cell survival and cell growth. May suppress the transcriptional activity of p53/TP53. This is Armadillo repeat-containing protein 10 (Armc10) from Mus musculus (Mouse).